Here is a 449-residue protein sequence, read N- to C-terminus: Hyaluronidase-1 (449 aa).

Residues 1–23 (MYHLWIKCLAAWIFLKRCNGVHA) form the signal peptide. 2 disulfides stabilise this stretch: cysteine 47–cysteine 340 and cysteine 211–cysteine 227. N-linked (GlcNAc...) asparagine glycans are attached at residues asparagine 67, asparagine 103, and asparagine 111. Glutamate 135 (proton donor) is an active-site residue. The N-linked (GlcNAc...) asparagine glycan is linked to asparagine 153. Residue asparagine 357 is glycosylated (N-linked (GlcNAc...) asparagine). Cystine bridges form between cysteine 365/cysteine 376, cysteine 370/cysteine 427, and cysteine 429/cysteine 438. N-linked (GlcNAc...) asparagine glycosylation is present at asparagine 401. An EGF-like domain is found at 427–438 (CQCYQGWKGLYC).

It belongs to the glycosyl hydrolase 56 family. Monomer. In terms of tissue distribution, expressed by the venom gland.

The protein localises to the secreted. It catalyses the reaction Random hydrolysis of (1-&gt;4)-linkages between N-acetyl-beta-D-glucosamine and D-glucuronate residues in hyaluronate.. Snake venom endo-hyaluronidase that degrades hyaluronan to smaller oligosaccharide fragments. In venom, it is not toxic by itself, but increases the diffusion of other venom proteins by degrading the extracellular matrix. In addition, it displays antiedematogenic activity. This Bitis arietans (African puff adder) protein is Hyaluronidase-1.